A 379-amino-acid polypeptide reads, in one-letter code: Forkhead box protein F1 (379 aa).

The tract at residues 1–45 is disordered; sequence MSSAPEKQQPPHGGGGGGGGGGGAAMDPASSGPSKAKKTNAGIRR. Over residues 12 to 24 the composition is skewed to gly residues; that stretch reads HGGGGGGGGGGGA. The fork-head DNA-binding region spans 47–138; that stretch reads EKPPYSYIAL…EFMFEEGSFR (92 aa).

As to expression, expressed in lung and placenta.

It is found in the nucleus. Its function is as follows. Probable transcription activator for a number of lung-specific genes. This is Forkhead box protein F1 (FOXF1) from Homo sapiens (Human).